We begin with the raw amino-acid sequence, 136 residues long: Protein PsiE (136 aa).

A run of 4 helical transmembrane segments spans residues 15-35 (ILQN…VVFL), 55-75 (YELV…ALIV), 83-103 (HFPL…LIIV), and 108-128 (PMDV…LWLC).

This sequence belongs to the PsiE family.

It localises to the cell inner membrane. The sequence is that of Protein PsiE from Salmonella agona (strain SL483).